The following is a 419-amino-acid chain: Carbohydrate sulfotransferase 12 (419 aa).

The Cytoplasmic portion of the chain corresponds to 1–5 (MTKPR). A helical; Signal-anchor for type II membrane protein membrane pass occupies residues 6–26 (LFRLWLVLGSALMILLIIVYW). Residues 27 to 419 (DNVGTAHFYL…YPKPENLLRD (393 aa)) are Lumenal-facing. A compositionally biased stretch (basic and acidic residues) spans 78–87 (HNDLSRRKTE). Residues 78–99 (HNDLSRRKTEQPPVPAPSKPVL) form a disordered region. Residue N139 is glycosylated (N-linked (GlcNAc...) asparagine). 176–182 (PKVACTN) contacts 3'-phosphoadenylyl sulfate. N214 carries an N-linked (GlcNAc...) asparagine glycan. 250–258 (RDPFVRLIS) provides a ligand contact to 3'-phosphoadenylyl sulfate. N285 and N375 each carry an N-linked (GlcNAc...) asparagine glycan.

The protein belongs to the sulfotransferase 2 family.

It is found in the golgi apparatus membrane. The enzyme catalyses chondroitin beta-D-glucuronate + n 3'-phosphoadenylyl sulfate = chondroitin 4'-sulfate + n adenosine 3',5'-bisphosphate + n H(+). Its function is as follows. Catalyzes the transfer of sulfate to position 4 of the N-acetylgalactosamine (GalNAc) residue of chondroitin and desulfated dermatan sulfate. Chondroitin sulfate constitutes the predominant proteoglycan present in cartilage and is distributed on the surfaces of many cells and extracellular matrices. Activity toward partially desulfated dermatan sulfate is however lower. Does not form 4, 6-di-O-sulfated GalNAc when chondroitin sulfate C is used as an acceptor. This chain is Carbohydrate sulfotransferase 12 (Chst12), found in Mus musculus (Mouse).